The chain runs to 2397 residues: Cell wall alpha-1,3-glucan synthase mok11 (2397 aa).

The tract at residues 1683–1705 (SNQQSFDFKSSESDSFPQKSPSV) is disordered. Residues 1687 to 1698 (SFDFKSSESDSF) show a composition bias toward low complexity.

The protein belongs to the glycosyltransferase group 1 family.

It catalyses the reaction [(1-&gt;3)-alpha-D-glucosyl](n) + UDP-alpha-D-glucose = [(1-&gt;3)-alpha-D-glucosyl](n+1) + UDP + H(+). The sequence is that of Cell wall alpha-1,3-glucan synthase mok11 (mok11) from Schizosaccharomyces pombe (strain 972 / ATCC 24843) (Fission yeast).